The following is a 354-amino-acid chain: Probable L-ascorbate-6-phosphate lactonase UlaG (354 aa).

This sequence belongs to the UlaG family. The cofactor is a divalent metal cation.

Its subcellular location is the cytoplasm. It carries out the reaction L-ascorbate 6-phosphate + H2O = 3-dehydro-L-gulonate 6-phosphate. It functions in the pathway cofactor degradation; L-ascorbate degradation; D-xylulose 5-phosphate from L-ascorbate: step 1/4. In terms of biological role, probably catalyzes the hydrolysis of L-ascorbate-6-P into 3-keto-L-gulonate-6-P. Is essential for L-ascorbate utilization under anaerobic conditions. The sequence is that of Probable L-ascorbate-6-phosphate lactonase UlaG from Salmonella heidelberg (strain SL476).